Consider the following 1071-residue polypeptide: SLIT-ROBO Rho GTPase-activating protein 2 (1071 aa).

In terms of domain architecture, F-BAR spans 22–325 (KEIRAQLTEQ…AVENLDATSD (304 aa)). Residues 181 to 203 (LKEAEKQEEKQIGKSVKQEDRQT) show a composition bias toward basic and acidic residues. The segment at 181–211 (LKEAEKQEEKQIGKSVKQEDRQTPRSPDSTA) is disordered. S206 is subject to Phosphoserine. Residues 363–401 (QSELVQRCQQLQSRLSTLKIENEEVKKTMEATLQTIQDI) adopt a coiled-coil conformation. Phosphoserine is present on residues S427, S500, S691, and S695. Positions 489 to 679 (ARRSSTVRKQ…TIIIQHENIF (191 aa)) constitute a Rho-GAP domain. The segment at 700 to 726 (CDSTHGETTSAEDSTQDVTAEHHTSDD) is disordered. Positions 705 to 717 (GETTSAEDSTQDV) are enriched in polar residues. S724 carries the post-translational modification Phosphoserine. Residues 728-787 (CEPIEAIAKFDYVGRTARELSFKKGASLLLYQRASDDWWEGRHNGIDGLIPHQYIVVQDT) form the SH3 domain. S795 is subject to Phosphoserine. Disordered regions lie at residues 795–819 (SSPKSEIEVMSEPPEEKVTARTGAS) and 838–918 (RKRP…DSPQ). Low complexity predominate over residues 855–868 (HGLGSSLTDSSSLG). Composition is skewed to polar residues over residues 874 to 885 (RPSSQPIMSQNL) and 897 to 907 (GHGSLNSISRH). Position 916 is a phosphoserine (S916). Residue R927 is modified to Symmetric dimethylarginine; by PRMT5. S930 carries the phosphoserine modification. Residues 940-968 (EVIAQDIEATMNSALNELQELERQSSAKH) adopt a coiled-coil conformation. Residues 984–1012 (PVVAPTSEPSSPLHTQLLKDPEPAFQRSA) form a disordered region. Phosphoserine occurs at positions 990, 994, 1013, and 1027. Residues 1029-1071 (KMAAPVKPPATRPKPTVFPKTNATSPGVNSSASPQATDKSCTV) are disordered. Over residues 1047-1071 (PKTNATSPGVNSSASPQATDKSCTV) the composition is skewed to polar residues.

In terms of assembly, homodimer. Forms a heterooligomer with SRGAP1 and SRGAP3 through its F-BAR domain. Interacts (via SH3 domain) with GPHN. Interacts (via SH3 domain) with FMNL1 (activated by RAC1); regulates the actin filament severing activity of FMNL1 and actin dynamics. Interacts (via SH3 domain) with FMNL3. Interacts with RAC1; specifically stimulates RAC1 GTPase activity. Interacts (via F-BAR domain) with HOMER1. Interacts with ROBO1 and ROBO2. Interacts with FASLG. Interacts with PRMT5. In terms of processing, methylation at Arg-927 is required for the stimulation of cell migration, dimerization and localization at the plasma membrane protrusions.

The protein localises to the cell membrane. Its subcellular location is the cell projection. The protein resides in the dendritic spine. It is found in the postsynaptic density. It localises to the postsynaptic cell membrane. The protein localises to the lamellipodium. Its subcellular location is the cytoplasmic vesicle. The protein resides in the phagosome. It is found in the nucleus. It localises to the cytoplasm. The protein localises to the cytosol. Postsynaptic RAC1 GTPase activating protein (GAP) that plays a key role in neuronal morphogenesis and migration mainly during development of the cerebral cortex. Regulates excitatory and inhibitory synapse maturation and density in cortical pyramidal neurons. SRGAP2/SRGAP2A limits excitatory and inhibitory synapse density through its RAC1-specific GTPase activating activity, while it promotes maturation of both excitatory and inhibitory synapses through its ability to bind to the postsynaptic scaffolding protein HOMER1 at excitatory synapses, and the postsynaptic protein GPHN at inhibitory synapses. Mechanistically, acts by binding and deforming membranes, thereby regulating actin dynamics to regulate cell migration and differentiation. Promotes cell repulsion and contact inhibition of locomotion: localizes to protrusions with curved edges and controls the duration of RAC1 activity in contact protrusions. In non-neuronal cells, may also play a role in cell migration by regulating the formation of lamellipodia and filopodia. This Mus musculus (Mouse) protein is SLIT-ROBO Rho GTPase-activating protein 2.